The following is a 399-amino-acid chain: Argininosuccinate synthase (399 aa).

Residues 10 to 18 (AYSGGVDTS) and Ala-38 contribute to the ATP site. Tyr-89 serves as a coordination point for L-citrulline. An ATP-binding site is contributed by Gly-119. Positions 121, 125, and 126 each coordinate L-aspartate. Asn-125 serves as a coordination point for L-citrulline. L-citrulline contacts are provided by Arg-129, Ser-177, Ser-186, Glu-262, and Tyr-274.

The protein belongs to the argininosuccinate synthase family. Type 1 subfamily. In terms of assembly, homotetramer.

It is found in the cytoplasm. The catalysed reaction is L-citrulline + L-aspartate + ATP = 2-(N(omega)-L-arginino)succinate + AMP + diphosphate + H(+). It participates in amino-acid biosynthesis; L-arginine biosynthesis; L-arginine from L-ornithine and carbamoyl phosphate: step 2/3. This is Argininosuccinate synthase from Acaryochloris marina (strain MBIC 11017).